The following is a 555-amino-acid chain: Oxamate carbamoyltransferase subunit AllF (555 aa).

Belongs to the AllF family. The OXTCase is composed of 3 subunits, AllF, AllG and AllH. It depends on Mg(2+) as a cofactor.

The catalysed reaction is oxamate + carbamoyl phosphate = N-carbamoyl-2-oxoglycine + phosphate. It functions in the pathway nitrogen metabolism; (S)-allantoin degradation. In terms of biological role, component of a carbamoyltransferase involved in the anaerobic nitrogen utilization via the assimilation of allantoin. Catalyzes the conversion of oxalurate (N-carbamoyl-2-oxoglycine) to oxamate and carbamoyl phosphate. The polypeptide is Oxamate carbamoyltransferase subunit AllF (Escherichia coli (strain K12)).